The sequence spans 467 residues: Uronate isomerase (467 aa).

This sequence belongs to the metallo-dependent hydrolases superfamily. Uronate isomerase family.

The enzyme catalyses D-glucuronate = D-fructuronate. It carries out the reaction aldehydo-D-galacturonate = keto-D-tagaturonate. Its pathway is carbohydrate metabolism; pentose and glucuronate interconversion. The polypeptide is Uronate isomerase (Geobacillus thermodenitrificans (strain NG80-2)).